We begin with the raw amino-acid sequence, 348 residues long: UPF0324 membrane protein BH02290 (348 aa).

Helical transmembrane passes span 13-35 (AFLNDFSPGILACLIISVLAYGL), 45-67 (QAWLESLVLAILLGSITGSCFTL), 74-96 (GITFCAKTLLEIAIVLLGASISV), 106-128 (LLASIIFVIFVTLILSFTIGRLF), 135-157 (AMLVACGNAICGNSAIVAVAPVI), 167-189 (SIAFTALLGVLIILFLPFLHPFL), 196-218 (YGVLSGMVVYAVPQVLAATASVS), 223-245 (QIATVVKLVRVLMLGPLIFALSI), 257-275 (LHTLVPWFIIGFIFMMLIR), 285-307 (LIPIRFIAQLFTVISMAALGLGV), and 319-341 (VILASTCSILILGVCSLIMIQLN).

It belongs to the UPF0324 family.

Its subcellular location is the cell membrane. The chain is UPF0324 membrane protein BH02290 from Bartonella henselae (strain ATCC 49882 / DSM 28221 / CCUG 30454 / Houston 1) (Rochalimaea henselae).